The sequence spans 598 residues: UvrABC system protein C (598 aa).

Residues Gln11–Ile91 enclose the GIY-YIG domain. One can recognise a UVR domain in the interval Lys195–Thr230.

The protein belongs to the UvrC family. Interacts with UvrB in an incision complex.

The protein localises to the cytoplasm. The UvrABC repair system catalyzes the recognition and processing of DNA lesions. UvrC both incises the 5' and 3' sides of the lesion. The N-terminal half is responsible for the 3' incision and the C-terminal half is responsible for the 5' incision. This Methanosphaera stadtmanae (strain ATCC 43021 / DSM 3091 / JCM 11832 / MCB-3) protein is UvrABC system protein C.